The sequence spans 311 residues: Porphobilinogen deaminase (311 aa).

An S-(dipyrrolylmethanemethyl)cysteine modification is found at Cys245.

Belongs to the HMBS family. In terms of assembly, monomer. Dipyrromethane serves as cofactor.

It carries out the reaction 4 porphobilinogen + H2O = hydroxymethylbilane + 4 NH4(+). It participates in porphyrin-containing compound metabolism; protoporphyrin-IX biosynthesis; coproporphyrinogen-III from 5-aminolevulinate: step 2/4. Functionally, tetrapolymerization of the monopyrrole PBG into the hydroxymethylbilane pre-uroporphyrinogen in several discrete steps. In Deinococcus deserti (strain DSM 17065 / CIP 109153 / LMG 22923 / VCD115), this protein is Porphobilinogen deaminase.